The sequence spans 83 residues: Toxin To12 (83 aa).

The N-terminal stretch at 1–19 (MKGLILFICGFMMIGVILA) is a signal peptide. An LCN-type CS-alpha/beta domain is found at 20-82 (KEGYPMDHEG…VWDYYNNKCG (63 aa)). 4 disulfide bridges follow: cysteine 30–cysteine 81, cysteine 34–cysteine 57, cysteine 42–cysteine 62, and cysteine 46–cysteine 64. The residue at position 81 (cysteine 81) is a Cysteine amide.

Belongs to the long (4 C-C) scorpion toxin superfamily. Sodium channel inhibitor family. Beta subfamily. In terms of tissue distribution, expressed by the venom gland.

The protein resides in the secreted. Functionally, beta toxins bind voltage-independently at site-4 of sodium channels (Nav) and shift the voltage of activation toward more negative potentials thereby affecting sodium channel activation and promoting spontaneous and repetitive firing. The protein is Toxin To12 of Tityus obscurus (Amazonian scorpion).